A 331-amino-acid chain; its full sequence is Probable transcriptional regulatory protein At2g25830 (331 aa).

This sequence belongs to the TACO1 family.

The chain is Probable transcriptional regulatory protein At2g25830 from Arabidopsis thaliana (Mouse-ear cress).